Reading from the N-terminus, the 171-residue chain is Large ribosomal subunit protein uL5 (171 aa).

The protein belongs to the universal ribosomal protein uL5 family. Part of the 50S ribosomal subunit; contacts the 5S rRNA and probably tRNA. Forms a bridge to the 30S subunit in the 70S ribosome.

Functionally, this is one of the proteins that bind and probably mediate the attachment of the 5S RNA into the large ribosomal subunit, where it forms part of the central protuberance. In the 70S ribosome it contacts protein S13 of the 30S subunit (bridge B1b), connecting the 2 subunits; this bridge is implicated in subunit movement. May contact the P site tRNA; the 5S rRNA and some of its associated proteins might help stabilize positioning of ribosome-bound tRNAs. In Methanocorpusculum labreanum (strain ATCC 43576 / DSM 4855 / Z), this protein is Large ribosomal subunit protein uL5.